Consider the following 120-residue polypeptide: NAD(P)H-quinone oxidoreductase subunit 3, chloroplastic (120 aa).

3 helical membrane passes run 9 to 29 (IFWA…LISG), 64 to 84 (MFAL…PWAM), and 88 to 108 (VLGV…ILGL).

Belongs to the complex I subunit 3 family. In terms of assembly, NDH is composed of at least 16 different subunits, 5 of which are encoded in the nucleus.

The protein resides in the plastid. It is found in the chloroplast thylakoid membrane. It catalyses the reaction a plastoquinone + NADH + (n+1) H(+)(in) = a plastoquinol + NAD(+) + n H(+)(out). The catalysed reaction is a plastoquinone + NADPH + (n+1) H(+)(in) = a plastoquinol + NADP(+) + n H(+)(out). Its function is as follows. NDH shuttles electrons from NAD(P)H:plastoquinone, via FMN and iron-sulfur (Fe-S) centers, to quinones in the photosynthetic chain and possibly in a chloroplast respiratory chain. The immediate electron acceptor for the enzyme in this species is believed to be plastoquinone. Couples the redox reaction to proton translocation, and thus conserves the redox energy in a proton gradient. In Arabidopsis thaliana (Mouse-ear cress), this protein is NAD(P)H-quinone oxidoreductase subunit 3, chloroplastic.